We begin with the raw amino-acid sequence, 365 residues long: Phospho-N-acetylmuramoyl-pentapeptide-transferase (365 aa).

The next 10 membrane-spanning stretches (helical) occupy residues 29 to 49 (VGGL…IIVW), 73 to 93 (GTPT…VIIW), 97 to 117 (SNIY…LGLV), 133 to 153 (ILNK…IMFI), 171 to 191 (IVCK…VGTS), 202 to 222 (GLVI…TWVV), 242 to 262 (LVVV…FNSY), 266 to 286 (IFMG…VSIL), 291 to 311 (YLLL…IFQV), and 341 to 361 (IVVR…VIFI).

The protein belongs to the glycosyltransferase 4 family. MraY subfamily. Mg(2+) serves as cofactor.

Its subcellular location is the cell inner membrane. The enzyme catalyses UDP-N-acetyl-alpha-D-muramoyl-L-alanyl-gamma-D-glutamyl-meso-2,6-diaminopimeloyl-D-alanyl-D-alanine + di-trans,octa-cis-undecaprenyl phosphate = di-trans,octa-cis-undecaprenyl diphospho-N-acetyl-alpha-D-muramoyl-L-alanyl-D-glutamyl-meso-2,6-diaminopimeloyl-D-alanyl-D-alanine + UMP. It functions in the pathway cell wall biogenesis; peptidoglycan biosynthesis. Functionally, catalyzes the initial step of the lipid cycle reactions in the biosynthesis of the cell wall peptidoglycan: transfers peptidoglycan precursor phospho-MurNAc-pentapeptide from UDP-MurNAc-pentapeptide onto the lipid carrier undecaprenyl phosphate, yielding undecaprenyl-pyrophosphoryl-MurNAc-pentapeptide, known as lipid I. The protein is Phospho-N-acetylmuramoyl-pentapeptide-transferase of Blochmanniella floridana.